The sequence spans 445 residues: N-succinylarginine dihydrolase (445 aa).

Substrate-binding positions include 19–28, asparagine 110, and 137–138; these read AGLSYGNVAS and HR. Glutamate 174 is a catalytic residue. Arginine 214 lines the substrate pocket. Histidine 250 is an active-site residue. Positions 252 and 363 each coordinate substrate. The active-site Nucleophile is cysteine 369.

Belongs to the succinylarginine dihydrolase family. In terms of assembly, homodimer.

The catalysed reaction is N(2)-succinyl-L-arginine + 2 H2O + 2 H(+) = N(2)-succinyl-L-ornithine + 2 NH4(+) + CO2. It participates in amino-acid degradation; L-arginine degradation via AST pathway; L-glutamate and succinate from L-arginine: step 2/5. In terms of biological role, catalyzes the hydrolysis of N(2)-succinylarginine into N(2)-succinylornithine, ammonia and CO(2). The sequence is that of N-succinylarginine dihydrolase from Aeromonas hydrophila subsp. hydrophila (strain ATCC 7966 / DSM 30187 / BCRC 13018 / CCUG 14551 / JCM 1027 / KCTC 2358 / NCIMB 9240 / NCTC 8049).